We begin with the raw amino-acid sequence, 501 residues long: DDB1- and CUL4-associated factor 12-like protein 1 (501 aa).

The segment covering Met-1–Gly-37 has biased composition (polar residues). The interval Met-1–Glu-67 is disordered. WD repeat units follow at residues Pro-185–Leu-225, Gly-230–Ser-268, Pro-298–Leu-337, and Ser-384–Glu-423.

The protein belongs to the WD repeat DCAF12 family.

The chain is DDB1- and CUL4-associated factor 12-like protein 1 (Dcaf12l1) from Mus musculus (Mouse).